Reading from the N-terminus, the 575-residue chain is Stage VI sporulation protein D (575 aa).

The disordered stretch occupies residues 159–502 (EELSEPPAHS…ETKEPQTKES (344 aa)). The segment covering 200 to 212 (GLREELETEKAES) has biased composition (basic and acidic residues). Acidic residues-rich tracts occupy residues 229–238 (KEEEESEELA) and 249–264 (ETEESEPEPDPSEIEI). Basic and acidic residues-rich tracts occupy residues 266–275 (EIVKAKKETA), 283–302 (DVREEADSPAETELREHVGA), and 310–325 (AELHSETVIAKEKEET). Positions 438-448 (EEEEQEEESFE) are enriched in acidic residues. Residues 449–464 (IEVRKTPSAEEPKEET) show a composition bias toward basic and acidic residues. The segment covering 465–474 (PFQSFQLPES) has biased composition (polar residues). A compositionally biased stretch (basic and acidic residues) spans 493 to 502 (ETKEPQTKES). Residues 523–567 (KICIVQQEDTIERLCERYEITSQQLIRMNSLALDDELKAGQILYI) form the LysM domain.

Functionally, required for assembly of a normal spore coat. May be a component of the innermost layer of the spore coat that aids in its adherence to the prespore. The chain is Stage VI sporulation protein D (spoVID) from Bacillus subtilis (strain 168).